A 255-amino-acid polypeptide reads, in one-letter code: Putative transcription factor D5 (255 aa).

Its function is as follows. Putative transcription factor required for the expression of viral late genes. This Escherichia coli (Enterobacteria phage T5) protein is Putative transcription factor D5.